Consider the following 109-residue polypeptide: Small ribosomal subunit protein bS18c (109 aa).

A disordered region spans residues 82 to 109; it reads GFERSESTPRTNALKPRNKNKQNNQTQF.

The protein belongs to the bacterial ribosomal protein bS18 family. As to quaternary structure, part of the 30S ribosomal subunit.

The protein localises to the plastid. The protein is Small ribosomal subunit protein bS18c of Cuscuta reflexa (Southern Asian dodder).